A 360-amino-acid polypeptide reads, in one-letter code: MWSSIISFLFFSVALCQPLLFQKRSSNVSDFISFNASLPNVTIFAMGGTIAGYASSSTETVDYAAGSVGIATLVDAVPAIKNFSNIRGVQVTNVGSEELTPANVLNLTQLILAEVAKPDVHGIVVTHGTDSLEETAIFLDMTVNTTKPIVVVGAMRPSTAISADGPMNLLNAVVVAASNRSIGRGTMILLNDRIGSAFYTTKTNGNMLDTFKSYEAGFLGMILDQRPHFFYSPATPTGKVHFDVSNTTELPAVEILYGYQGLNPNLAKAAVDLGAKGLVLAGMGAASWTDPGNEVIDGLISNQSIPVVYSHRTMDGFSDYYYNGIPAYFQNPQKARYMLMLSINAGYSIQNITDIFSLEY.

The first 16 residues, 1-16 (MWSSIISFLFFSVALC), serve as a signal peptide directing secretion. N-linked (GlcNAc...) asparagine glycosylation is found at N27, N35, and N40. Residues 39–359 (PNVTIFAMGG…QNITDIFSLE (321 aa)) enclose the Asparaginase/glutaminase domain. Catalysis depends on T49, which acts as the O-isoaspartyl threonine intermediate. Residue N82 is glycosylated (N-linked (GlcNAc...) asparagine). S96 serves as a coordination point for substrate. Residue N106 is glycosylated (N-linked (GlcNAc...) asparagine). 129–130 (TD) is a substrate binding site. N-linked (GlcNAc...) asparagine glycosylation is found at N144, N179, N246, N302, and N351.

Belongs to the asparaginase 1 family.

It is found in the secreted. The protein localises to the cell wall. It catalyses the reaction L-asparagine + H2O = L-aspartate + NH4(+). In Schizosaccharomyces pombe (strain 972 / ATCC 24843) (Fission yeast), this protein is Probable L-asparaginase 3.